Consider the following 422-residue polypeptide: UDP-N-acetylglucosamine 1-carboxyvinyltransferase (422 aa).

Residue 22–23 (KN) coordinates phosphoenolpyruvate. Arg-93 is a binding site for UDP-N-acetyl-alpha-D-glucosamine. Residue Cys-117 is the Proton donor of the active site. Cys-117 is subject to 2-(S-cysteinyl)pyruvic acid O-phosphothioketal. UDP-N-acetyl-alpha-D-glucosamine-binding positions include 122-126 (RPVDL), Asp-308, and Leu-330.

It belongs to the EPSP synthase family. MurA subfamily.

The protein localises to the cytoplasm. The catalysed reaction is phosphoenolpyruvate + UDP-N-acetyl-alpha-D-glucosamine = UDP-N-acetyl-3-O-(1-carboxyvinyl)-alpha-D-glucosamine + phosphate. It participates in cell wall biogenesis; peptidoglycan biosynthesis. Functionally, cell wall formation. Adds enolpyruvyl to UDP-N-acetylglucosamine. The polypeptide is UDP-N-acetylglucosamine 1-carboxyvinyltransferase (Helicobacter pylori (strain J99 / ATCC 700824) (Campylobacter pylori J99)).